The following is a 331-amino-acid chain: Anthranilate phosphoribosyltransferase (331 aa).

5-phospho-alpha-D-ribose 1-diphosphate is bound by residues Gly79, 82–83, Thr87, 89–92, 107–115, and Ala119; these read GD, NIST, and KHGNYGATS. Gly79 lines the anthranilate pocket. Ser91 lines the Mg(2+) pocket. Position 110 (Asn110) interacts with anthranilate. Arg165 is a binding site for anthranilate. Residues Asp223 and Glu224 each contribute to the Mg(2+) site.

It belongs to the anthranilate phosphoribosyltransferase family. In terms of assembly, homodimer. Mg(2+) serves as cofactor.

The enzyme catalyses N-(5-phospho-beta-D-ribosyl)anthranilate + diphosphate = 5-phospho-alpha-D-ribose 1-diphosphate + anthranilate. It functions in the pathway amino-acid biosynthesis; L-tryptophan biosynthesis; L-tryptophan from chorismate: step 2/5. In terms of biological role, catalyzes the transfer of the phosphoribosyl group of 5-phosphorylribose-1-pyrophosphate (PRPP) to anthranilate to yield N-(5'-phosphoribosyl)-anthranilate (PRA). The protein is Anthranilate phosphoribosyltransferase of Bacteroides fragilis (strain ATCC 25285 / DSM 2151 / CCUG 4856 / JCM 11019 / LMG 10263 / NCTC 9343 / Onslow / VPI 2553 / EN-2).